Consider the following 110-residue polypeptide: Minor capsid protein VP2 (110 aa).

The protein belongs to the vesivirus VP2 protein family. Homooligomer. The portal-like structure consists in 12 copies of VP2. Interacts with capsid protein VP1.

Its subcellular location is the virion. The protein resides in the host cytoplasm. In terms of biological role, minor structural protein that forms a portal-like structure at a unique three-fold axis of symmetry, following binding to the host receptor. The channel formed by VP2 may allow the delivery of the viral genome through the host endosomal membrane. This is Minor capsid protein VP2 from Otariidae (fur seals &amp; sea lions).